Consider the following 535-residue polypeptide: Formate--tetrahydrofolate ligase (535 aa).

Residue 50–57 participates in ATP binding; it reads TPAGEGKT.

It belongs to the formate--tetrahydrofolate ligase family.

It catalyses the reaction (6S)-5,6,7,8-tetrahydrofolate + formate + ATP = (6R)-10-formyltetrahydrofolate + ADP + phosphate. The protein operates within one-carbon metabolism; tetrahydrofolate interconversion. The protein is Formate--tetrahydrofolate ligase of Picrophilus torridus (strain ATCC 700027 / DSM 9790 / JCM 10055 / NBRC 100828 / KAW 2/3).